The chain runs to 626 residues: (+)-3-carene synthase 1, chloroplastic (626 aa).

The transit peptide at 1-45 (MSLISAVPLASSCVSKSLISSVREHKALRRAIATLQMSRPGKSVA) directs the protein to the chloroplast. Residues Asp-377, Asp-381, and Asp-529 each contribute to the Mg(2+) site. The short motif at 377 to 381 (DDMYD) is the DDXXD motif element.

It belongs to the terpene synthase family. Tpsd subfamily. Mg(2+) serves as cofactor. Requires Mn(2+) as cofactor.

It is found in the plastid. Its subcellular location is the chloroplast. It carries out the reaction (2E)-geranyl diphosphate = (+)-car-3-ene + diphosphate. It catalyses the reaction (2E)-geranyl diphosphate = terpinolene + diphosphate. The protein operates within terpene metabolism; oleoresin biosynthesis. It participates in secondary metabolite biosynthesis; terpenoid biosynthesis. Its function is as follows. Monoterpene synthase (TPS) involved in the biosynthesis of monoterpene natural products included in conifer oleoresin secretions and volatile emissions; these compounds contribute to biotic and abiotic stress defense against herbivores and pathogens. Catalyzes the conversion of (2E)-geranyl diphosphate (GPP) to (+)-3-carene and, to a lower extent, to terpinolene. This chain is (+)-3-carene synthase 1, chloroplastic, found in Pinus banksiana (Jack pine).